A 323-amino-acid chain; its full sequence is Olfactory receptor 2AE1 (323 aa).

Over 1–25 the chain is Extracellular; sequence MWQKNQTSLADFILEGLFDDSLTHL. Asn5 carries an N-linked (GlcNAc...) asparagine glycan. The chain crosses the membrane as a helical span at residues 26–49; the sequence is FLFSLTMVVFLIAVSGNTLTILLI. The Cytoplasmic segment spans residues 50–57; the sequence is CIDPQLHT. Residues 58–79 traverse the membrane as a helical segment; it reads PMYFLLSQLSLMDLMHVSTIIL. Residues 80 to 100 are Extracellular-facing; it reads KMATNYLSGKKSISFVGCATQ. The cysteines at positions 97 and 189 are disulfide-linked. Residues 101–120 traverse the membrane as a helical segment; that stretch reads HFLYLCLGGAECFLLAVMSY. At 121–139 the chain is on the cytoplasmic side; the sequence is DRYVAICHPLRYAVLMNKK. The chain crosses the membrane as a helical span at residues 140 to 158; it reads VGLMMAVMSWLGASVNSLI. Residues 159–195 are Extracellular-facing; it reads HMAILMHFPFCGPRKVYHFYCEFPAVVKLVCGDITVY. The chain crosses the membrane as a helical span at residues 196–218; sequence ETTVYISSILLLLPIFLISTSYV. Residues 219–235 are Cytoplasmic-facing; the sequence is FILQSVIQMRSSGSKRN. A helical transmembrane segment spans residues 236–258; sequence AFATCGSHLTVVSLWFGACIFSY. Over 259–271 the chain is Extracellular; it reads MRPRSQCTLLQNK. Residues 272-291 traverse the membrane as a helical segment; it reads VGSVFYSIITPTLNSLIYTL. The Cytoplasmic portion of the chain corresponds to 292 to 323; sequence RNKDVAKALRRVLRRDVITQCIQRLQLWLPRV.

This sequence belongs to the G-protein coupled receptor 1 family.

Its subcellular location is the cell membrane. In terms of biological role, odorant receptor. The protein is Olfactory receptor 2AE1 (OR2AE1) of Homo sapiens (Human).